Reading from the N-terminus, the 858-residue chain is Bifunctional uridylyltransferase/uridylyl-removing enzyme (858 aa).

The tract at residues 1-324 (MSAHAAPSPE…PATSGITRVL (324 aa)) is uridylyltransferase. The segment at 325 to 681 (SPDRFVEKQG…ARPSPIGDAL (357 aa)) is uridylyl-removing. In terms of domain architecture, HD spans 443 to 565 (VDQHILMVLR…VGNERYLTAL (123 aa)). ACT domains are found at residues 682–761 (QVLV…PEPS) and 790–858 (ILSV…AIAV).

It belongs to the GlnD family. The cofactor is Mg(2+).

It carries out the reaction [protein-PII]-L-tyrosine + UTP = [protein-PII]-uridylyl-L-tyrosine + diphosphate. It catalyses the reaction [protein-PII]-uridylyl-L-tyrosine + H2O = [protein-PII]-L-tyrosine + UMP + H(+). With respect to regulation, uridylyltransferase (UTase) activity is inhibited by glutamine, while glutamine activates uridylyl-removing (UR) activity. In terms of biological role, modifies, by uridylylation and deuridylylation, the PII regulatory proteins (GlnB and homologs), in response to the nitrogen status of the cell that GlnD senses through the glutamine level. Under low glutamine levels, catalyzes the conversion of the PII proteins and UTP to PII-UMP and PPi, while under higher glutamine levels, GlnD hydrolyzes PII-UMP to PII and UMP (deuridylylation). Thus, controls uridylylation state and activity of the PII proteins, and plays an important role in the regulation of nitrogen fixation and metabolism. The polypeptide is Bifunctional uridylyltransferase/uridylyl-removing enzyme (Burkholderia lata (strain ATCC 17760 / DSM 23089 / LMG 22485 / NCIMB 9086 / R18194 / 383)).